Reading from the N-terminus, the 330-residue chain is GMP reductase (330 aa).

The Thioimidate intermediate role is filled by Cys-180. 209-232 (LIADGGIRHNGDIAKSVRFGASMV) contributes to the NADP(+) binding site.

The protein belongs to the IMPDH/GMPR family. GuaC type 2 subfamily.

It catalyses the reaction IMP + NH4(+) + NADP(+) = GMP + NADPH + 2 H(+). Catalyzes the irreversible NADPH-dependent deamination of GMP to IMP. It functions in the conversion of nucleobase, nucleoside and nucleotide derivatives of G to A nucleotides, and in maintaining the intracellular balance of A and G nucleotides. In Lactobacillus johnsonii (strain CNCM I-12250 / La1 / NCC 533), this protein is GMP reductase.